The sequence spans 485 residues: Protein disulfide-isomerase 1 (485 aa).

A signal peptide spans 1-20 (MSLSVSFIFLLVASIGAVVA). 2 consecutive Thioredoxin domains span residues 21-130 (DSEN…KKSG) and 342-470 (YLEG…KYAG). Disulfide bonds link C52–C55 and C393–C396. Residues C393 and C396 each act as nucleophile in the active site. Positions 482–485 (HEEL) match the Prevents secretion from ER motif.

It belongs to the protein disulfide isomerase family.

The protein resides in the endoplasmic reticulum lumen. The enzyme catalyses Catalyzes the rearrangement of -S-S- bonds in proteins.. This is Protein disulfide-isomerase 1 (pdi-1) from Caenorhabditis elegans.